Consider the following 550-residue polypeptide: Arginine--tRNA ligase (550 aa).

Positions 123–133 match the 'HIGH' region motif; sequence ANPTGYLHIAH.

This sequence belongs to the class-I aminoacyl-tRNA synthetase family. Monomer.

It is found in the cytoplasm. The catalysed reaction is tRNA(Arg) + L-arginine + ATP = L-arginyl-tRNA(Arg) + AMP + diphosphate. This chain is Arginine--tRNA ligase, found in Ureaplasma parvum serovar 3 (strain ATCC 27815 / 27 / NCTC 11736).